A 504-amino-acid chain; its full sequence is Zinc finger CCCH-type with G patch domain-containing protein (504 aa).

Residues Leu95–Gly121 form a disordered region. A compositionally biased stretch (acidic residues) spans Asp107–Asp118. A C3H1-type zinc finger spans residues Lys165–Val191. Residues Thr308–Glu354 form the G-patch domain.

It localises to the nucleus. Functionally, transcription repressor that specifically binds the 5'-GGAG[GA]A[GA]A-3' consensus sequence. Represses transcription by recruiting the chromatin multiprotein complex NuRD to target promoters. Negatively regulates expression of EGFR, a gene involved in cell proliferation, survival and migration. The sequence is that of Zinc finger CCCH-type with G patch domain-containing protein (zgpat) from Danio rerio (Zebrafish).